Consider the following 526-residue polypeptide: WRKY transcription factor 72A (526 aa).

Basic and acidic residues-rich tracts occupy residues 40–52 and 60–76; these read KERK…DDNS and LTGD…KADM. 2 disordered regions span residues 40-76 and 170-200; these read KERK…KADM and SSTK…QTWP. Residues 62 to 106 are a coiled coil; sequence GDKKDDQLESAKADMEEVMEENQRLKKHLDKIMKDYRNLQMQFHE. A compositionally biased stretch (low complexity) spans 170–185; it reads SSTKSSPSNLSPENSL. Residues 232-298 constitute a DNA-binding region (WRKY); the sequence is CDTPTMNDGC…YEGTHNHPLP (67 aa).

It belongs to the WRKY group II-b family. Expressed in roots, trichomes and fruits.

The protein resides in the nucleus. Functionally, transcription activator involved in the transcriptional regulation of terpene biosynthesis in glandular trichomes. Binds to the promoter of the linalool synthase TPS5 and promotes TPS5 gene transactivation. In association with WRKY72B, contributes to basal defense against root-knot nematodes (RKNs) and potato aphids, as well as Mi-1-mediated gene-for-gene resistance to these pests. Both WRKY72A and WRKY72B are not required for gene-for-gene resistance mediated by Pto, another tomato R gene. This is WRKY transcription factor 72A from Solanum lycopersicum (Tomato).